Consider the following 70-residue polypeptide: Beta-defensin 131B (70 aa).

The first 22 residues, 1 to 22 (MRVLFFVFGVLSLMSTVPPTRS), serve as a signal peptide directing secretion. Disulfide bonds link Cys-29/Cys-56, Cys-36/Cys-50, and Cys-40/Cys-57.

This sequence belongs to the beta-defensin family.

The protein resides in the secreted. Has antibacterial activity. This is Beta-defensin 131B from Homo sapiens (Human).